The primary structure comprises 295 residues: uncharacterized protein (295 aa).

The protein belongs to the NAD(P)-dependent epimerase/dehydratase family.

This is an uncharacterized protein from Schizosaccharomyces pombe (strain 972 / ATCC 24843) (Fission yeast).